Reading from the N-terminus, the 465-residue chain is Ribosomal oxygenase 2 (465 aa).

In terms of domain architecture, JmjC spans 139–271; sequence QPQRYKDELW…NSWGDCLLDS (133 aa). Residues H179, D181, and H240 each coordinate Fe cation. S309 carries the phosphoserine modification.

It belongs to the ROX family. MINA53 subfamily. Fe(2+) serves as cofactor. Predominantly expressed in testis. Expressed at high levels in spleen, thymus, and colon, but barely detectable in brain, skeletal muscle, and seminal vesicle (at protein level).

The protein resides in the nucleus. It localises to the nucleolus. It carries out the reaction L-histidyl-[ribosomal protein uL15] + 2-oxoglutarate + O2 = (3S)-3-hydroxy-L-histidyl-[ribosomal protein uL15] + succinate + CO2. It catalyses the reaction L-histidyl-[protein] + 2-oxoglutarate + O2 = (3S)-3-hydroxy-L-histidyl-[protein] + succinate + CO2. In terms of biological role, oxygenase that can act as both a histone lysine demethylase and a ribosomal histidine hydroxylase. Is involved in the demethylation of trimethylated 'Lys-9' on histone H3 (H3K9me3), leading to an increase in ribosomal RNA expression. Also catalyzes the hydroxylation of 60S ribosomal protein L27a on 'His-39'. May play an important role in cell growth and survival. May be involved in ribosome biogenesis, most likely during the assembly process of pre-ribosomal particles. In Mus musculus (Mouse), this protein is Ribosomal oxygenase 2.